A 410-amino-acid polypeptide reads, in one-letter code: Peptidase T (410 aa).

His78 is a binding site for Zn(2+). Asp80 is a catalytic residue. Asp140 provides a ligand contact to Zn(2+). Glu173 acts as the Proton acceptor in catalysis. Zn(2+) is bound by residues Glu174, Asp196, and His379.

It belongs to the peptidase M20B family. Requires Zn(2+) as cofactor.

It localises to the cytoplasm. The catalysed reaction is Release of the N-terminal residue from a tripeptide.. Its function is as follows. Cleaves the N-terminal amino acid of tripeptides. The polypeptide is Peptidase T (Pectobacterium carotovorum subsp. carotovorum (strain PC1)).